The primary structure comprises 391 residues: Elongation factor Tu 2 (391 aa).

The region spanning 10–201 (KPHVNIGTIG…EVDRYIPTPE (192 aa)) is the tr-type G domain. Residues 19–26 (GHVDHGKT) form a G1 region. GTP is bound at residue 19-26 (GHVDHGKT). Mg(2+) is bound at residue threonine 26. Residues 55–59 (GITIS) are G2. The interval 76–79 (DCPG) is G3. GTP contacts are provided by residues 76–80 (DCPGH) and 131–134 (NKVD). Residues 131-134 (NKVD) are G4. The tract at residues 169–171 (SAL) is G5.

This sequence belongs to the TRAFAC class translation factor GTPase superfamily. Classic translation factor GTPase family. EF-Tu/EF-1A subfamily. In terms of assembly, monomer.

Its subcellular location is the cytoplasm. It catalyses the reaction GTP + H2O = GDP + phosphate + H(+). Functionally, GTP hydrolase that promotes the GTP-dependent binding of aminoacyl-tRNA to the A-site of ribosomes during protein biosynthesis. The polypeptide is Elongation factor Tu 2 (Bartonella bacilliformis (strain ATCC 35685 / KC583 / Herrer 020/F12,63)).